The primary structure comprises 292 residues: ATP synthase subunit a (292 aa).

7 helical membrane-spanning segments follow: residues 39–59 (QILG…FYKL), 73–93 (FLLL…DLLG), 102–122 (YFLM…LGGI), 128–148 (SLTF…VMGI), 172–192 (TFIP…SISL), 196–216 (GNIL…IFIF), and 231–251 (VFAG…AGVL).

This sequence belongs to the ATPase A chain family. F-type ATPases have 2 components, CF(1) - the catalytic core - and CF(0) - the membrane proton channel. CF(1) has five subunits: alpha(3), beta(3), gamma(1), delta(1), epsilon(1). CF(0) has three main subunits: a(1), b(2) and c(9-12). The alpha and beta chains form an alternating ring which encloses part of the gamma chain. CF(1) is attached to CF(0) by a central stalk formed by the gamma and epsilon chains, while a peripheral stalk is formed by the delta and b chains.

The protein resides in the cell membrane. Key component of the proton channel; it plays a direct role in the translocation of protons across the membrane. The chain is ATP synthase subunit a from Mycoplasma genitalium (strain ATCC 33530 / DSM 19775 / NCTC 10195 / G37) (Mycoplasmoides genitalium).